Reading from the N-terminus, the 430-residue chain is Small ribosomal subunit protein uS9m (430 aa).

A mitochondrion-targeting transit peptide spans 1 to 34 (MLSRLFLRHSNLRFVTLVSSKSNSQIFSSFIRPL). The tract at residues 32–97 (RPLSTNSSGG…GGEGKWPEEP (66 aa)) is disordered. Positions 39–48 (SGGGGNGDGN) are enriched in gly residues. The span at 68 to 79 (GPFSSDDSFGSS) shows a compositional bias: low complexity. Positions 80–91 (GVAGSGLPGGEG) are enriched in gly residues.

The protein belongs to the universal ribosomal protein uS9 family. Interacts (via C terminus) with PIA2. Component of the mitochondrial ribosome small subunit. Expressed in root tips, young leaves, flowers and siliques.

The protein resides in the mitochondrion. Functionally, mitochondrial ribosomal protein required for central cell maturation. May work together with PIA2 in controlling female gametophyte development, possibly by regulating the expression of some mitochondrial proteins. This chain is Small ribosomal subunit protein uS9m, found in Arabidopsis thaliana (Mouse-ear cress).